Consider the following 192-residue polypeptide: UPF0149 protein YPO0911/y3298/YP_3608 (192 aa).

It belongs to the UPF0149 family.

The chain is UPF0149 protein YPO0911/y3298/YP_3608 from Yersinia pestis.